The primary structure comprises 265 residues: Synaptoporin (265 aa).

At Met-1–Val-4 the chain is on the cytoplasmic side. An MARVEL domain is found at Met-1–Gly-202. A helical membrane pass occupies residues Ile-5–Leu-25. The Vesicular segment spans residues Arg-26–Phe-81. Asn-33 and Asn-38 each carry an N-linked (GlcNAc...) asparagine glycan. A helical membrane pass occupies residues Phe-82 to Phe-102. Topologically, residues Phe-103 to Pro-114 are cytoplasmic. Residues Leu-115–Trp-135 traverse the membrane as a helical segment. Over Ala-136–Asn-177 the chain is Vesicular. Asn-177 carries an N-linked (GlcNAc...) asparagine glycan. The helical transmembrane segment at Thr-178 to Phe-198 threads the bilayer. The Cytoplasmic portion of the chain corresponds to Lys-199 to Ile-265. Residues Tyr-210–Pro-214 form repeat 1. The tract at residues Tyr-210–Ala-242 is 5 X approximate repeats. Residues Ser-212 and Ser-220 each carry the phosphoserine modification. The segment at Ser-221–Ile-265 is disordered. 4 repeat units span residues Tyr-222–Gly-226, Tyr-227–Ser-231, Tyr-232–Gly-236, and Tyr-238–Ala-242. The segment covering Gln-224–Ser-243 has biased composition (low complexity). Residues Leu-244–Ile-265 show a composition bias toward polar residues.

Belongs to the synaptophysin/synaptobrevin family. Central nervous system.

It is found in the cytoplasmic vesicle. The protein resides in the secretory vesicle. Its subcellular location is the synaptic vesicle membrane. The protein localises to the synapse. It localises to the synaptosome. In terms of biological role, intrinsic membrane protein of small synaptic vesicles. Probable vesicular channel protein. In Rattus norvegicus (Rat), this protein is Synaptoporin (Synpr).